The following is a 180-amino-acid chain: Calcineurin subunit B type 1 (180 aa).

Gly2 is lipidated: N-myristoyl glycine. 4 EF-hand domains span residues 25 to 60 (AELKKLYRRFQMLDKDGSGTLTTDEFLSIPDLALNP), 62 to 92 (LERVIQIFDQNKDNEIEFFEFVGTLATLSHK), 94 to 129 (TKEDKLKFLFQIYDIDCDGFISNGELFQVLKMMVGT), and 135 to 170 (QLQQIVDKTIIEGDYDKDGKISFDEFIHMIGNQEGI). Ca(2+)-binding residues include Asp38, Asp40, Ser42, Thr44, Glu49, Asp70, Asn72, Asp74, Glu76, Glu81, Asp107, Asp109, Asp111, and Glu118. Residues 138 to 143 (QIVDKT) are canA/calcineurin A binding. The Ca(2+) site is built by Asp148, Asp150, Asp152, Lys154, and Glu159.

The protein belongs to the calcineurin regulatory subunit family. As to quaternary structure, forms a complex composed of a calmodulin-dependent catalytic subunit canA (also known as calcineurin A) and a regulatory Ca(2+)-binding subunit cnbA (also known as calcineurin B).

Regulatory subunit of calcineurin, a calcium-dependent, calmodulin stimulated protein phosphatase. Confers calcium sensitivity. Important for stalk formation. This Dictyostelium discoideum (Social amoeba) protein is Calcineurin subunit B type 1 (cnbA).